The following is a 213-amino-acid chain: Orotate phosphoribosyltransferase (213 aa).

Residue Lys-26 participates in 5-phospho-alpha-D-ribose 1-diphosphate binding. 34-35 (FF) lines the orotate pocket. Residues 72-73 (YK), Arg-98, Lys-99, Lys-102, His-104, and 123-131 (DDVISAGTS) each bind 5-phospho-alpha-D-ribose 1-diphosphate. Orotate-binding residues include Ser-127 and Arg-155.

Belongs to the purine/pyrimidine phosphoribosyltransferase family. PyrE subfamily. Homodimer. It depends on Mg(2+) as a cofactor.

It catalyses the reaction orotidine 5'-phosphate + diphosphate = orotate + 5-phospho-alpha-D-ribose 1-diphosphate. It participates in pyrimidine metabolism; UMP biosynthesis via de novo pathway; UMP from orotate: step 1/2. Its function is as follows. Catalyzes the transfer of a ribosyl phosphate group from 5-phosphoribose 1-diphosphate to orotate, leading to the formation of orotidine monophosphate (OMP). The chain is Orotate phosphoribosyltransferase from Neisseria meningitidis serogroup A / serotype 4A (strain DSM 15465 / Z2491).